The chain runs to 445 residues: Glucose-6-phosphate isomerase 2 (445 aa).

Glu-285 serves as the catalytic Proton donor. Catalysis depends on residues His-306 and Lys-420.

It belongs to the GPI family. As to quaternary structure, homodimer.

Its subcellular location is the cytoplasm. The catalysed reaction is alpha-D-glucose 6-phosphate = beta-D-fructose 6-phosphate. It participates in carbohydrate biosynthesis; gluconeogenesis. It functions in the pathway carbohydrate degradation; glycolysis; D-glyceraldehyde 3-phosphate and glycerone phosphate from D-glucose: step 2/4. Its function is as follows. Catalyzes the reversible isomerization of glucose-6-phosphate to fructose-6-phosphate. This chain is Glucose-6-phosphate isomerase 2, found in Geobacillus stearothermophilus (Bacillus stearothermophilus).